The sequence spans 161 residues: MDQEAVGNVVLLALVTLISVVQNAFFAHKVEHESKAHNGRSFQRTGTLAFERVYTANQNCVDAYPTFLVVLWTAGLLCSQVPAAFAGLMYLFVRQKYFVGYLGERTQSTPGYIFGKRIILFLFLMSFAGILNHYLIFFFGSDFENYIRTVSTTISPLLLIP.

Over 1-8 (MDQEAVGN) the chain is Lumenal. Residues 9 to 30 (VVLLALVTLISVVQNAFFAHKV) traverse the membrane as a helical segment. Residues 31-52 (EHESKAHNGRSFQRTGTLAFER) lie on the Cytoplasmic side of the membrane. Residues 53-77 (VYTANQNCVDAYPTFLVVLWTAGLL) form a helical membrane-spanning segment. Residues 78–80 (CSQ) lie on the Lumenal side of the membrane. A helical membrane pass occupies residues 81 to 102 (VPAAFAGLMYLFVRQKYFVGYL). Over 103 to 107 (GERTQ) the chain is Cytoplasmic. The stretch at 108–115 (STPGYIFG) is an intramembrane region. The chain crosses the membrane as a helical span at residues 116–128 (KRIILFLFLMSFA). The Lumenal portion of the chain corresponds to 129 to 161 (GILNHYLIFFFGSDFENYIRTVSTTISPLLLIP).

This sequence belongs to the MAPEG family. As to quaternary structure, homotrimer. Interacts with LTC4S and ALOX5.

The protein localises to the nucleus membrane. It is found in the endoplasmic reticulum membrane. Required for leukotriene biosynthesis by ALOX5 (5-lipoxygenase). Anchors ALOX5 to the membrane. Binds arachidonic acid, and could play an essential role in the transfer of arachidonic acid to ALOX5. Binds to MK-886, a compound that blocks the biosynthesis of leukotrienes. The sequence is that of Arachidonate 5-lipoxygenase-activating protein (Alox5ap) from Mus musculus (Mouse).